The following is a 167-amino-acid chain: Zymogen granule membrane protein 16 (167 aa).

The signal sequence occupies residues Met-1 to Gly-16. The Jacalin-type lectin domain maps to Ser-24–Val-159.

The protein belongs to the jacalin lectin family. As to expression, highly expressed in liver. Detected at lower levels in colon, ileum and jejunum.

The protein resides in the secreted. Its subcellular location is the extracellular space. It localises to the extracellular matrix. The protein localises to the zymogen granule lumen. It is found in the golgi apparatus lumen. In terms of biological role, may play a role in protein trafficking. May act as a linker molecule between the submembranous matrix on the luminal side of zymogen granule membrane (ZGM) and aggregated secretory proteins during granule formation in the TGN. The polypeptide is Zymogen granule membrane protein 16 (ZG16) (Homo sapiens (Human)).